Here is a 137-residue protein sequence, read N- to C-terminus: Nucleoside diphosphate kinase (137 aa).

Residues Lys-9, Phe-57, Arg-85, Thr-91, Arg-102, and Asn-112 each contribute to the ATP site. The active-site Pros-phosphohistidine intermediate is His-115.

Belongs to the NDK family. As to quaternary structure, homotetramer. It depends on Mg(2+) as a cofactor.

The protein resides in the cytoplasm. It catalyses the reaction a 2'-deoxyribonucleoside 5'-diphosphate + ATP = a 2'-deoxyribonucleoside 5'-triphosphate + ADP. It carries out the reaction a ribonucleoside 5'-diphosphate + ATP = a ribonucleoside 5'-triphosphate + ADP. Major role in the synthesis of nucleoside triphosphates other than ATP. The ATP gamma phosphate is transferred to the NDP beta phosphate via a ping-pong mechanism, using a phosphorylated active-site intermediate. The sequence is that of Nucleoside diphosphate kinase from Geobacter sp. (strain M21).